We begin with the raw amino-acid sequence, 28 residues long: Mu-theraphotoxin-Hsp1a (28 aa).

Disulfide bonds link cysteine 2–cysteine 16, cysteine 9–cysteine 21, and cysteine 15–cysteine 25. Asparagine 28 is modified (asparagine amide).

The protein belongs to the neurotoxin 30 (phrixotoxin) family. In terms of tissue distribution, expressed by the venom gland.

It is found in the secreted. In terms of biological role, potent and selective inhibitor of Nav1.7/SCN9A sodium channels. Inhibits Nav1.7/SCN9A peak current (IC(50)=13 nM). In vivo, does not induce visible signs of toxicity when intravenously injected into mice. The chain is Mu-theraphotoxin-Hsp1a from Homoeomma sp. (Peruvian tarantula).